The chain runs to 471 residues: Tetratricopeptide repeat protein 29 (471 aa).

TPR repeat units follow at residues 92–131 (DKLR…EAAE), 136–173 (YEEV…AQLI), 182–215 (AEAE…TQGR), 234–267 (VRTY…AREG), 274–307 (GEAS…STSL), 314–347 (GRAY…ARNN), and 354–387 (IQAC…AMEV).

The protein resides in the cytoplasm. It is found in the cytoskeleton. It localises to the flagellum axoneme. Functionally, axonemal protein which is implicated in axonemal and/or peri-axonemal structure assembly and regulates flagellum assembly and beating and therefore sperm motility. The protein is Tetratricopeptide repeat protein 29 (Ttc29) of Rattus norvegicus (Rat).